The chain runs to 320 residues: NAC domain-containing protein 18 (320 aa).

Residues Met-1–Arg-22 are disordered. A compositionally biased stretch (pro residues) spans Gly-9–Pro-18. Residues Leu-17 to Lys-177 form the NAC domain. A DNA-binding region spans residues Val-118 to Ser-183.

In terms of tissue distribution, restricted primarily to the region of the embryo including the SAM. Expressed in the outer integument, but seems not expressed in the embryo at the torpedo stage.

The protein resides in the nucleus. Functionally, may encode a transcription factor involved in the elaboration of shoot apical meristems (SAM). Together with NAC056/NARS1, regulates embryogenesis by regulating the development and degeneration of ovule integuments, a process required for intertissue communication between the embryo and the maternal integument. The sequence is that of NAC domain-containing protein 18 (NAC018) from Arabidopsis thaliana (Mouse-ear cress).